A 747-amino-acid polypeptide reads, in one-letter code: Ion-translocating oxidoreductase complex subunit C (747 aa).

4Fe-4S ferredoxin-type domains lie at 368–397 (MEPVAEEQSCIRCSQCADACPAGLLPQQLY) and 407–436 (KARNHHLFDCIECGACAYVCPSNIPLVQYY). C377, C380, C383, C387, C416, C419, C422, and C426 together coordinate [4Fe-4S] cluster. Residues 538–564 (VREERARENQTQQETPTVDVPSTELDD) form a disordered region.

Belongs to the 4Fe4S bacterial-type ferredoxin family. RnfC subfamily. As to quaternary structure, the complex is composed of six subunits: RnfA, RnfB, RnfC, RnfD, RnfE and RnfG. Requires [4Fe-4S] cluster as cofactor.

Its subcellular location is the cell inner membrane. Its function is as follows. Part of a membrane-bound complex that couples electron transfer with translocation of ions across the membrane. The protein is Ion-translocating oxidoreductase complex subunit C of Pectobacterium carotovorum subsp. carotovorum (strain PC1).